Here is a 320-residue protein sequence, read N- to C-terminus: MFLAADRPTTDLPADLPAAIAALKQELNAVILAHYYQEAAIQDVADYIGDSLGLSRQAAAADADVIVFAGVHFMAETAKILNPQRQVLLPDLAAGCSLADSCPPEAFAAFKAAHPNHIVISYINCTAEIKALSDIICTSSNAVKIVQQIPVDQPIIFAPDRNLGRYVMQQTGRDLVLWDGSCIVHETFSEQRLLELQARHPDAEIIAHPECETPVLDQARFIGSTTALLNYSLNSPSREFIVVTEPGIIHQMQQAAPEKTFIPAPPQDTTCACNECPFMRLNTLEKLYLCMRDRRPEIQIPEETRLAALRPIERMLAMSA.

Iminosuccinate contacts are provided by H34 and S51. C96 is a [4Fe-4S] cluster binding site. Residues 122–124 (YIN) and S139 contribute to the iminosuccinate site. C182 is a binding site for [4Fe-4S] cluster. Iminosuccinate contacts are provided by residues 208–210 (HPE) and T225. C276 is a binding site for [4Fe-4S] cluster.

Belongs to the quinolinate synthase family. Type 2 subfamily. [4Fe-4S] cluster is required as a cofactor.

The protein resides in the cytoplasm. The catalysed reaction is iminosuccinate + dihydroxyacetone phosphate = quinolinate + phosphate + 2 H2O + H(+). It participates in cofactor biosynthesis; NAD(+) biosynthesis; quinolinate from iminoaspartate: step 1/1. Its function is as follows. Catalyzes the condensation of iminoaspartate with dihydroxyacetone phosphate to form quinolinate. The chain is Quinolinate synthase from Synechococcus sp. (strain ATCC 27144 / PCC 6301 / SAUG 1402/1) (Anacystis nidulans).